Reading from the N-terminus, the 472-residue chain is Probable diguanylate cyclase DgcF (472 aa).

A run of 8 helical transmembrane segments spans residues 21 to 41 (SIAIFALTTLFYFIGAELRLV), 44 to 64 (LSLFWPLNGVMAGVFARYVWL), 90 to 110 (VSLAINFSNMMFIVTVALLVV), 128 to 148 (LFNYCLIAALLCAIVGAIGSV), 167 to 187 (FSTGVLIVPCMLTLAIPGVLP), 198 to 218 (IALIVSVIASVVIGGAGSLAF), 237 to 257 (LLTFVTGAVEIVLVANSVIDI), and 273 to 293 (LGIATMAICPIMVSFSVAAIN). A GGDEF domain is found at 330–467 (QHLTVMLLDI…GRNRTSTMRY (138 aa)). Asp338 and Ile339 together coordinate Mg(2+). Substrate-binding residues include Asn346, His351, and Asp355. Position 381 (Glu381) interacts with Mg(2+).

Homodimer. Mg(2+) is required as a cofactor.

Its subcellular location is the cell membrane. The catalysed reaction is 2 GTP = 3',3'-c-di-GMP + 2 diphosphate. The protein operates within purine metabolism; 3',5'-cyclic di-GMP biosynthesis. Functionally, catalyzes the synthesis of cyclic-di-GMP (c-di-GMP) via the condensation of 2 GTP molecules. The chain is Probable diguanylate cyclase DgcF from Escherichia coli O157:H7.